Consider the following 117-residue polypeptide: MSGEVSYHAGQTAEEAVARIYDRSGRPVAARRWRGLSGEIDLIAREGAEVIFIEVKKSTSHAAAAARLSRRQMDRIYGAASEFLAGEPRGQLTASRFDVALVDALGRVEIIENAFAA.

It belongs to the UPF0102 family.

This is UPF0102 protein RSKD131_0118 from Cereibacter sphaeroides (strain KD131 / KCTC 12085) (Rhodobacter sphaeroides).